Reading from the N-terminus, the 340-residue chain is CRISPR system Cmr subunit Cmr6 (340 aa).

Belongs to the CRISPR system Cmr6 family. In terms of assembly, part of the type III-B Cmr ribonucleoprotein (RNP) complex, an elongated RNP with Cmr2 and Cmr3 as the base, with Cmr4 and Cmr5 forming a helical core along the mature crRNA (39 or 45 nt in length), while the complex is capped by Cmr6 and Cmr1. The 5' end of the crRNA is bound to Cmr2 and Cmr3, while Cmr6 and a Cmr1 subunit (Cmr1-1 or Cmr1-2) cap the 3' end of the crRNA. The target RNA lies antiparallel to the crRNA, with its 5' end near Cmr1 and Cmr6 and its 3' end near Cmr2 and Cmr3; major target cleavage occurs nears the junction of Cmr1/Cmr6 and Cmr4/Cmr, with minor cleavage occurring at 6 nt intervals which coincide with the proposed spacing of Cmr4 subunits. Interacts with Cmr4 and Cmr5.

The protein resides in the cytoplasm. In terms of biological role, CRISPR (clustered regularly interspaced short palindromic repeat), is an adaptive immune system that provides protection against mobile genetic elements (viruses, transposable elements and conjugative plasmids). CRISPR clusters contain sequences complementary to antecedent mobile elements and target invading nucleic acids. CRISPR clusters are transcribed and processed into CRISPR RNA (crRNA), formerly called psiRNA (prokaryotic silencing) in this organism. Part of the Cmr ribonucleoprotein complex which has divalent cation-dependent endoribonuclease activity specific for ssRNA complementary to the crRNA (target RNA), generating 5' hydroxy- and 3' phosphate or 2'-3' cyclic phosphate termini. Cmr4 is probably the subunit that cleaves target RNA. Cmr complex does not cleave ssDNA complementary to the crRNA. Cleavage of invading RNA is guided by the crRNA; substrate cleavage occurs a fixed distance (14 nt) from the 3' end of the crRNA. In vitro reconstitution shows Cmr1-2 and Cmr5 are not absolutely necessary for target cleavage. The sequence is that of CRISPR system Cmr subunit Cmr6 from Pyrococcus furiosus (strain ATCC 43587 / DSM 3638 / JCM 8422 / Vc1).